The sequence spans 266 residues: 5'-nucleotidase SurE (266 aa).

Residues aspartate 8, aspartate 9, serine 39, and asparagine 93 each contribute to the a divalent metal cation site.

This sequence belongs to the SurE nucleotidase family. A divalent metal cation is required as a cofactor.

It is found in the cytoplasm. The catalysed reaction is a ribonucleoside 5'-phosphate + H2O = a ribonucleoside + phosphate. Its function is as follows. Nucleotidase that shows phosphatase activity on nucleoside 5'-monophosphates. The sequence is that of 5'-nucleotidase SurE from Pyrobaculum arsenaticum (strain DSM 13514 / JCM 11321 / PZ6).